The following is a 736-amino-acid chain: MAVRALKLLTTLLAVVAAASQAEVESEAGWGMVTPDLLFAEGTAAYARGDWPGVVLSMERALRSRAALRALRLRCRTQCAADFPWELDPDWSPSPAQASGAAALRDLSFFGGLLRRAACLRRCLGPPAAHSLSEEMELEFRKRSPYNYLQVAYFKINKLEKAVAAAHTFFVGNPEHMEMQQNLDYYQTMSGVKEADFKDLETQPHMQEFRLGVRLYSEEQPQEAVPHLEAALQEYFVAYEECRALCEGPYDYDGYNYLEYNADLFQAITDHYIQVLNCKQNCVTELASHPSREKPFEDFLPSHYNYLQFAYYNIGNYTQAVECAKTYLLFFPNDEVMNQNLAYYAAMLGEEHTRSIGPRESAKEYRQRSLLEKELLFFAYDVFGIPFVDPDSWTPEEVIPKRLQEKQKSERETAVRISQEIGNLMKEIETLVEEKTKESLDVSRLTREGGPLLYEGISLTMNSKLLNGSQRVVMDGVISDHECQELQRLTNVAATSGDGYRGQTSPHTPNEKFYGVTVFKALKLGQEGKVPLQSAHLYYNVTEKVRRIMESYFRLDTPLYFSYSHLVCRTAIEEVQAERKDDSHPVHVDNCILNAETLVCVKEPPAYTFRDYSAILYLNGDFDGGNFYFTELDAKTVTAEVQPQCGRAVGFSSGTENPHGVKAVTRGQRCAIALWFTLDPRHSERDRVQADDLVKMLFSPEEMDLSQEQPLDAQQGPPEPAQESLSGSESKPKDEL.

Residues 1–22 (MAVRALKLLTTLLAVVAAASQA) form the signal peptide. TPR repeat units lie at residues 35-68 (PDLLFAEGTAAYARGDWPGVVLSMERALRSRAAL), 143-176 (RSPYNYLQVAYFKINKLEKAVAAAHTFFVGNPEH), 205-238 (HMQEFRLGVRLYSEEQPQEAVPHLEAALQEYFVA), and 301-334 (PSHYNYLQFAYYNIGNYTQAVECAKTYLLFFPND). Residue Asn-316 is glycosylated (N-linked (GlcNAc...) asparagine). Positions 401–439 (KRLQEKQKSERETAVRISQEIGNLMKEIETLVEEKTKES) form a coiled coil. Residues Asn-467 and Asn-540 are each glycosylated (N-linked (GlcNAc...) asparagine). A Fe2OG dioxygenase domain is found at 564-678 (SHLVCRTAIE…RCAIALWFTL (115 aa)). Residues His-587, Asp-589, and His-659 each coordinate Fe cation. The active site involves Arg-669. The disordered stretch occupies residues 699-736 (SPEEMDLSQEQPLDAQQGPPEPAQESLSGSESKPKDEL). Positions 733-736 (KDEL) match the Prevents secretion from ER motif.

Belongs to the leprecan family. Fe cation is required as a cofactor. Requires L-ascorbate as cofactor. In terms of processing, O-glycosylated; chondroitin sulfate.

Its subcellular location is the endoplasmic reticulum. The protein resides in the secreted. It localises to the extracellular space. The protein localises to the extracellular matrix. The catalysed reaction is L-prolyl-[collagen] + 2-oxoglutarate + O2 = trans-3-hydroxy-L-prolyl-[collagen] + succinate + CO2. Functionally, basement membrane-associated chondroitin sulfate proteoglycan (CSPG). Has prolyl 3-hydroxylase activity catalyzing the post-translational formation of 3-hydroxyproline in -Xaa-Pro-Gly- sequences in collagens, especially types IV and V. May be involved in the secretory pathway of cells. Has growth suppressive activity in fibroblasts. The chain is Prolyl 3-hydroxylase 1 from Homo sapiens (Human).